We begin with the raw amino-acid sequence, 1025 residues long: Retrovirus-related Pol polyprotein from type-1 retrotransposable element R2 (1025 aa).

Positions 1–11 (NQIKKSNTSTG) are enriched in polar residues. Residues 1 to 38 (NQIKKSNTSTGARIPKAMTNPADNFAGGQWKPPGRRSA) are disordered. A C2H2-type zinc finger spans residues 46 to 69 (FVCEHCLRAFTTNTGRGLHIKRAH). Over residues 146-158 (NRARETELTRLET) the composition is skewed to basic and acidic residues. A disordered region spans residues 146 to 172 (NRARETELTRLETADEDPASQEQDNPN). One can recognise a Reverse transcriptase domain in the interval 358–635 (MIMYHGQCPR…DQWKYLGVVY (278 aa)). Positions 755–1025 (SLLGGDWVAE…YRTERRRTAN (271 aa)) are nucleic acid-binding endonuclease.

It carries out the reaction DNA(n) + a 2'-deoxyribonucleoside 5'-triphosphate = DNA(n+1) + diphosphate. The polypeptide is Retrovirus-related Pol polyprotein from type-1 retrotransposable element R2 (Nasonia vitripennis (Parasitic wasp)).